A 227-amino-acid chain; its full sequence is Cytidylate kinase (227 aa).

An ATP-binding site is contributed by 12–20 (GPSGAGKGT).

Belongs to the cytidylate kinase family. Type 1 subfamily.

The protein resides in the cytoplasm. It catalyses the reaction CMP + ATP = CDP + ADP. The catalysed reaction is dCMP + ATP = dCDP + ADP. The protein is Cytidylate kinase of Salmonella paratyphi B (strain ATCC BAA-1250 / SPB7).